The sequence spans 579 residues: Methionine--tRNA ligase (579 aa).

A 'HIGH' region motif is present at residues 14–24; that stretch reads PYINGVKHLGN. Zn(2+) contacts are provided by Cys-146, Cys-149, Cys-159, and Cys-162. Residues 346–350 carry the 'KMSKS' region motif; it reads KFSTS. Thr-349 is an ATP binding site.

Belongs to the class-I aminoacyl-tRNA synthetase family. MetG type 1 subfamily. In terms of assembly, monomer. Zn(2+) serves as cofactor.

It is found in the cytoplasm. The enzyme catalyses tRNA(Met) + L-methionine + ATP = L-methionyl-tRNA(Met) + AMP + diphosphate. Functionally, is required not only for elongation of protein synthesis but also for the initiation of all mRNA translation through initiator tRNA(fMet) aminoacylation. The chain is Methionine--tRNA ligase from Hyphomonas neptunium (strain ATCC 15444).